The sequence spans 248 residues: Ribonuclease 3 (248 aa).

Residues 16–145 enclose the RNase III domain; sequence TEGLETSIGY…LLAAMYLDGG (130 aa). Glutamate 58 provides a ligand contact to Mg(2+). Aspartate 62 is a catalytic residue. Mg(2+) is bound by residues asparagine 131 and glutamate 134. The active site involves glutamate 134. The DRBM domain occupies 172 to 241; it reads DFKTDFQELA…ARQCLERLET (70 aa).

This sequence belongs to the ribonuclease III family. As to quaternary structure, homodimer. The cofactor is Mg(2+).

The protein localises to the cytoplasm. It carries out the reaction Endonucleolytic cleavage to 5'-phosphomonoester.. Functionally, digests double-stranded RNA. Involved in the processing of primary rRNA transcript to yield the immediate precursors to the large and small rRNAs (23S and 16S). Processes some mRNAs, and tRNAs when they are encoded in the rRNA operon. Processes pre-crRNA and tracrRNA of type II CRISPR loci if present in the organism. This Geobacter sulfurreducens (strain ATCC 51573 / DSM 12127 / PCA) protein is Ribonuclease 3.